The primary structure comprises 156 residues: MNFGATFWGPMISFALFVWFTMKYVWPPIQTAMADRQKQIADGLAAGERGQKELDQAKSEVDKMLREAREQASQVIAQANKRQSELVEQAREEARQEAERVLAQARSEIDTEISQARDALRKEVVNLAVAGSSRILKREIDAKAHKDLIDDLVKQL.

The chain crosses the membrane as a helical span at residues 4–26 (GATFWGPMISFALFVWFTMKYVW).

This sequence belongs to the ATPase B chain family. F-type ATPases have 2 components, F(1) - the catalytic core - and F(0) - the membrane proton channel. F(1) has five subunits: alpha(3), beta(3), gamma(1), delta(1), epsilon(1). F(0) has three main subunits: a(1), b(2) and c(10-14). The alpha and beta chains form an alternating ring which encloses part of the gamma chain. F(1) is attached to F(0) by a central stalk formed by the gamma and epsilon chains, while a peripheral stalk is formed by the delta and b chains.

Its subcellular location is the cell inner membrane. F(1)F(0) ATP synthase produces ATP from ADP in the presence of a proton or sodium gradient. F-type ATPases consist of two structural domains, F(1) containing the extramembraneous catalytic core and F(0) containing the membrane proton channel, linked together by a central stalk and a peripheral stalk. During catalysis, ATP synthesis in the catalytic domain of F(1) is coupled via a rotary mechanism of the central stalk subunits to proton translocation. Functionally, component of the F(0) channel, it forms part of the peripheral stalk, linking F(1) to F(0). The sequence is that of ATP synthase subunit b from Alkalilimnicola ehrlichii (strain ATCC BAA-1101 / DSM 17681 / MLHE-1).